The following is a 945-amino-acid chain: Bifunctional glutamine synthetase adenylyltransferase/adenylyl-removing enzyme (945 aa).

Positions 1–440 (MMPLSPQLQQ…VFNELIGDDE (440 aa)) are adenylyl removase. The segment at 449 to 945 (AEYWRELWQD…SASWQKWLMA (497 aa)) is adenylyl transferase.

Belongs to the GlnE family. Mg(2+) is required as a cofactor.

The catalysed reaction is [glutamine synthetase]-O(4)-(5'-adenylyl)-L-tyrosine + phosphate = [glutamine synthetase]-L-tyrosine + ADP. The enzyme catalyses [glutamine synthetase]-L-tyrosine + ATP = [glutamine synthetase]-O(4)-(5'-adenylyl)-L-tyrosine + diphosphate. Its function is as follows. Involved in the regulation of glutamine synthetase GlnA, a key enzyme in the process to assimilate ammonia. When cellular nitrogen levels are high, the C-terminal adenylyl transferase (AT) inactivates GlnA by covalent transfer of an adenylyl group from ATP to specific tyrosine residue of GlnA, thus reducing its activity. Conversely, when nitrogen levels are low, the N-terminal adenylyl removase (AR) activates GlnA by removing the adenylyl group by phosphorolysis, increasing its activity. The regulatory region of GlnE binds the signal transduction protein PII (GlnB) which indicates the nitrogen status of the cell. This Klebsiella pneumoniae subsp. pneumoniae (strain ATCC 700721 / MGH 78578) protein is Bifunctional glutamine synthetase adenylyltransferase/adenylyl-removing enzyme.